Here is a 542-residue protein sequence, read N- to C-terminus: Chaperonin GroEL 4 (542 aa).

ATP contacts are provided by residues 30 to 33 (TLGP), Lys51, 87 to 91 (DGTTT), Gly415, and Asp496.

Belongs to the chaperonin (HSP60) family. As to quaternary structure, forms a cylinder of 14 subunits composed of two heptameric rings stacked back-to-back. Interacts with the co-chaperonin GroES.

It is found in the cytoplasm. It carries out the reaction ATP + H2O + a folded polypeptide = ADP + phosphate + an unfolded polypeptide.. Together with its co-chaperonin GroES, plays an essential role in assisting protein folding. The GroEL-GroES system forms a nano-cage that allows encapsulation of the non-native substrate proteins and provides a physical environment optimized to promote and accelerate protein folding. This Rhizobium etli (strain ATCC 51251 / DSM 11541 / JCM 21823 / NBRC 15573 / CFN 42) protein is Chaperonin GroEL 4.